Consider the following 162-residue polypeptide: Ubiquitin-fold modifier-conjugating enzyme 1 (162 aa).

The Glycyl thioester intermediate role is filled by C115.

Belongs to the ubiquitin-conjugating enzyme family. UFC1 subfamily. In terms of assembly, interacts with uba-5. As to expression, expressed in the intestine.

Its function is as follows. E2-like enzyme which forms an intermediate with ufm-1. The intermediate is formed via a thioester linkage. The polypeptide is Ubiquitin-fold modifier-conjugating enzyme 1 (Caenorhabditis elegans).